A 74-amino-acid polypeptide reads, in one-letter code: Exodeoxyribonuclease 7 small subunit (74 aa).

This sequence belongs to the XseB family. In terms of assembly, heterooligomer composed of large and small subunits.

It is found in the cytoplasm. It catalyses the reaction Exonucleolytic cleavage in either 5'- to 3'- or 3'- to 5'-direction to yield nucleoside 5'-phosphates.. In terms of biological role, bidirectionally degrades single-stranded DNA into large acid-insoluble oligonucleotides, which are then degraded further into small acid-soluble oligonucleotides. In Vesicomyosocius okutanii subsp. Calyptogena okutanii (strain HA), this protein is Exodeoxyribonuclease 7 small subunit.